The sequence spans 331 residues: 6-phosphogluconolactonase (331 aa).

This sequence belongs to the cycloisomerase 2 family.

The enzyme catalyses 6-phospho-D-glucono-1,5-lactone + H2O = 6-phospho-D-gluconate + H(+). The protein operates within carbohydrate degradation; pentose phosphate pathway; D-ribulose 5-phosphate from D-glucose 6-phosphate (oxidative stage): step 2/3. Functionally, catalyzes the hydrolysis of 6-phosphogluconolactone to 6-phosphogluconate. The polypeptide is 6-phosphogluconolactonase (Enterobacter sp. (strain 638)).